Consider the following 424-residue polypeptide: Histidinol dehydrogenase (424 aa).

Residues Tyr124, Gln186, and Asn209 each coordinate NAD(+). Substrate-binding residues include Ser232, Gln254, and His257. Zn(2+) contacts are provided by Gln254 and His257. Active-site proton acceptor residues include Glu322 and His323. Residues His323, Asp356, Glu410, and His415 each contribute to the substrate site. Asp356 contributes to the Zn(2+) binding site. His415 is a Zn(2+) binding site.

The protein belongs to the histidinol dehydrogenase family. Requires Zn(2+) as cofactor.

The catalysed reaction is L-histidinol + 2 NAD(+) + H2O = L-histidine + 2 NADH + 3 H(+). The protein operates within amino-acid biosynthesis; L-histidine biosynthesis; L-histidine from 5-phospho-alpha-D-ribose 1-diphosphate: step 9/9. Catalyzes the sequential NAD-dependent oxidations of L-histidinol to L-histidinaldehyde and then to L-histidine. The polypeptide is Histidinol dehydrogenase (Moorella thermoacetica (strain ATCC 39073 / JCM 9320)).